The chain runs to 135 residues: Small ribosomal subunit protein uS11 (135 aa).

Belongs to the universal ribosomal protein uS11 family. Part of the 30S ribosomal subunit. Interacts with proteins S7 and S18. Binds to IF-3.

Located on the platform of the 30S subunit, it bridges several disparate RNA helices of the 16S rRNA. Forms part of the Shine-Dalgarno cleft in the 70S ribosome. In Protochlamydia amoebophila (strain UWE25), this protein is Small ribosomal subunit protein uS11.